We begin with the raw amino-acid sequence, 677 residues long: Transketolase (677 aa).

A substrate-binding site is contributed by histidine 27. Thiamine diphosphate contacts are provided by residues histidine 66 and 114–116; that span reads GPL. Aspartate 155 provides a ligand contact to Mg(2+). The thiamine diphosphate site is built by glycine 156 and asparagine 185. Mg(2+) contacts are provided by asparagine 185 and isoleucine 187. Residues histidine 261, arginine 356, and serine 383 each contribute to the substrate site. Histidine 261 serves as a coordination point for thiamine diphosphate. Residues glutamate 415 and phenylalanine 442 each contribute to the thiamine diphosphate site. Glutamate 415 (proton donor) is an active-site residue. Substrate-binding residues include histidine 466, aspartate 474, and arginine 525.

It belongs to the transketolase family. In terms of assembly, homodimer. It depends on Mg(2+) as a cofactor. The cofactor is Ca(2+). Mn(2+) serves as cofactor. Requires Co(2+) as cofactor. Thiamine diphosphate is required as a cofactor.

The catalysed reaction is D-sedoheptulose 7-phosphate + D-glyceraldehyde 3-phosphate = aldehydo-D-ribose 5-phosphate + D-xylulose 5-phosphate. In terms of biological role, catalyzes the transfer of a two-carbon ketol group from a ketose donor to an aldose acceptor, via a covalent intermediate with the cofactor thiamine pyrophosphate. The protein is Transketolase (TKT) of Scheffersomyces stipitis (strain ATCC 58785 / CBS 6054 / NBRC 10063 / NRRL Y-11545) (Yeast).